We begin with the raw amino-acid sequence, 1214 residues long: MPRRSARKAQSATASPADTNVVPAKDAPTTNSPPSTTSPNQAAADANQQQAGIVSSQSGPNAVGDSAPSTSVNNDGDIITRPTSDSIAAVANATKPAAVVSDPQSMKVTPIVNPSSYVCNVCNARFSTMSALSEHLRSDHRDDASTLLATPMINNAIRSFLTAWDGIRILSPDVSSKHLSAYLDSAVANGPELIVEDTGLCTSFMLLDNIPSAHLTKELIGFTWFMQMYQMTPPLPEGAVNRIVCMTNWASLGDEGRGLEVRLPPPTDSSVHAYKTVLSRGYIDNAQFNPLALRSNVLLMLLQFTLSNLKINKSSTFTSDVTTITSGRMIRAFEGRPELLALAYPGRAVLPTQTKNAQFLSTAIADRIGRLDRANLIGGEVSAMVECMELCDALTLHIRETYVMLLRSMHQDPTQIVQIVNECANNLLNSTIPISLRPTILCPWFASSEDLRLQQVMHLVNISSNTAAALPLVEALSTLLRSVTPLVLDPTVLTNAITTISESTTQTISPISEILRLLQPMGNDYAAFWKCIASWAYNGLVTTVLSEDAFPDSSQSITHLPSMWKCLFLTLAGPMTSDPHSPVKVFMALANLLAQPEPIAIGVPGMHQTTPASQFSHPGVWPPGFLNPQLINPQQAPLLRAFAEHIRANWPQPSEFGYGSTLQGSANLFIPPNRMVYPWPNQPLPRLTVAPTYDSAMSNWISTTIAFFIRVVNSVNMTATVNDLTRRTMTGVMTAMRQVKTMTPFYIQHMCPTELSVLASVTVTPPFQVPFTRLVQNDVITNVLVARVDPAQRGDAAVDIRATHATFAAALPVDPAAIVVAMLCGQTETNLIPSHHYGKAFAPLFASNAMFTRNQRAVITREAFVCARSAVAQCQDAGFLVPRPLDALRQFDVTSAAAAEIMHAVNDAFKTAFDLDGALLDGLALYGDPRIADLSAAYLQYGGNVVREHVPPGPSHIHRTLQQVESTFMAEMNLFNVARGNLYLVQTATNGNWSPMAPVAAPPFVRGGPNVRVVGRFGTIVPRPDGLEPQLIDDGNVPRDIAGDWVYPSDVLQVSVAVFCDYVWPMVKAGRTRVLVELGHYVYTLHYYDPQISLDEAPILEEWLSKINPAGIPPVPFCIPIPQVYPCITARRVHYAFTSENNNDSLFSTNAASIDTAFGENAAVSPLRWPGLVDPNYRVGTNDLPNRITLYNSLYRYNFTYPTLDGIMYVRSAT.

The disordered stretch occupies residues 1-80 (MPRRSARKAQ…SVNNDGDIIT (80 aa)). The segment covering 8-18 (KAQSATASPAD) has biased composition (polar residues). Low complexity predominate over residues 28-51 (PTTNSPPSTTSPNQAAADANQQQA). A C2H2-type zinc finger spans residues 117–140 (YVCNVCNARFSTMSALSEHLRSDH).

The protein belongs to the turreted BTV-fold inner capsid family. Homodecamer; each decamer is made up of two conformers of VP2, called VP2A and VP2B. 12 homodecamers assemble to form an icosahedral capsid. Interacts with VP6.

The protein resides in the virion. In terms of biological role, inner capsid protein that self-assembles to form an icosahedral capsid with a T=2 symmetry, which consists of 120 copies of VP2, with channels at each of its five-fold vertices. This capsid constitutes the innermost concentric layer of the viral mature particle. This is Inner capsid protein VP3 (S3) from Notemigonus crysoleucas (Golden shiner).